The sequence spans 271 residues: Glutamate racemase (271 aa).

Residues 9 to 10 and 41 to 42 each bind substrate; these read DS and YG. Cysteine 72 acts as the Proton donor/acceptor in catalysis. 73 to 74 contacts substrate; it reads NT. Cysteine 183 acts as the Proton donor/acceptor in catalysis. Position 184 to 185 (184 to 185) interacts with substrate; sequence TH.

This sequence belongs to the aspartate/glutamate racemases family.

The catalysed reaction is L-glutamate = D-glutamate. It participates in cell wall biogenesis; peptidoglycan biosynthesis. In terms of biological role, provides the (R)-glutamate required for cell wall biosynthesis. The polypeptide is Glutamate racemase (Exiguobacterium sibiricum (strain DSM 17290 / CCUG 55495 / CIP 109462 / JCM 13490 / 255-15)).